A 491-amino-acid polypeptide reads, in one-letter code: Sterol 14-alpha demethylase (491 aa).

Residues 20-40 traverse the membrane as a helical segment; the sequence is LWMLSTVALLSILVVSVVINV. Cys-430 is a heme binding site.

This sequence belongs to the cytochrome P450 family. Requires heme as cofactor.

The protein localises to the endoplasmic reticulum membrane. It carries out the reaction a 14alpha-methyl steroid + 3 reduced [NADPH--hemoprotein reductase] + 3 O2 = a Delta(14) steroid + formate + 3 oxidized [NADPH--hemoprotein reductase] + 4 H2O + 4 H(+). The catalysed reaction is a 14alpha-methyl steroid + reduced [NADPH--hemoprotein reductase] + O2 = a 14alpha-hydroxymethyl steroid + oxidized [NADPH--hemoprotein reductase] + H2O + H(+). It catalyses the reaction a 14alpha-hydroxymethyl steroid + reduced [NADPH--hemoprotein reductase] + O2 = a 14alpha-formyl steroid + oxidized [NADPH--hemoprotein reductase] + 2 H2O + H(+). The enzyme catalyses a 14alpha-formyl steroid + reduced [NADPH--hemoprotein reductase] + O2 = a Delta(14) steroid + formate + oxidized [NADPH--hemoprotein reductase] + H2O + 2 H(+). It carries out the reaction lanosterol + 3 reduced [NADPH--hemoprotein reductase] + 3 O2 = 4,4-dimethyl-5alpha-cholesta-8,14,24-trien-3beta-ol + formate + 3 oxidized [NADPH--hemoprotein reductase] + 4 H2O + 4 H(+). The catalysed reaction is lanosterol + reduced [NADPH--hemoprotein reductase] + O2 = 32-hydroxylanosterol + oxidized [NADPH--hemoprotein reductase] + H2O + H(+). It catalyses the reaction 32-hydroxylanosterol + reduced [NADPH--hemoprotein reductase] + O2 = 32-oxolanosterol + oxidized [NADPH--hemoprotein reductase] + 2 H2O + H(+). The enzyme catalyses 32-oxolanosterol + reduced [NADPH--hemoprotein reductase] + O2 = 4,4-dimethyl-5alpha-cholesta-8,14,24-trien-3beta-ol + formate + oxidized [NADPH--hemoprotein reductase] + H2O + 2 H(+). It carries out the reaction eburicol + 3 reduced [NADPH--hemoprotein reductase] + 3 O2 = 14-demethyleburicol + formate + 3 oxidized [NADPH--hemoprotein reductase] + 4 H2O + 4 H(+). The catalysed reaction is eburicol + reduced [NADPH--hemoprotein reductase] + O2 = 32-hydroxyeburicol + oxidized [NADPH--hemoprotein reductase] + H2O + H(+). It catalyses the reaction 32-hydroxyeburicol + reduced [NADPH--hemoprotein reductase] + O2 = 32-oxoeburicol + oxidized [NADPH--hemoprotein reductase] + 2 H2O + H(+). The enzyme catalyses 32-oxoeburicol + reduced [NADPH--hemoprotein reductase] + O2 = 14-demethyleburicol + formate + oxidized [NADPH--hemoprotein reductase] + H2O + 2 H(+). It participates in steroid biosynthesis; sterol biosynthesis. Sterol 14alpha-demethylase, encoded by cyp51A, cyp51B and cyp51C, that plays a critical role in the third module of ergosterol biosynthesis pathway, being ergosterol the major sterol component in fungal membranes that participates in a variety of functions. The third module or late pathway involves the ergosterol synthesis itself through consecutive reactions that mainly occur in the endoplasmic reticulum (ER) membrane. In filamentous fungi, during the initial step of this module, lanosterol (lanosta-8,24-dien-3beta-ol) can be metabolized to eburicol. Sterol 14alpha-demethylase catalyzes the three-step oxidative removal of the 14alpha-methyl group (C-32) of both these sterols in the form of formate, and converts eburicol and lanosterol to 14-demethyleburicol (4,4,24-trimethylergosta-8,14,24(28)-trienol) and 4,4-dimethyl-5alpha-cholesta-8,14,24-trien-3beta-ol, respectively, which are further metabolized by other enzymes in the pathway to ergosterol. Can also use substrates not intrinsic to fungi, such as 24,25-dihydrolanosterol (DHL), producing 4,4'-dimethyl-8,14-cholestadien-3-beta-ol, but at lower rates than the endogenous substrates. In terms of biological role, as a target of azole drugs, plays a crucial role in azole susceptibility. The protein is Sterol 14-alpha demethylase of Aspergillus flavus (strain ATCC 200026 / FGSC A1120 / IAM 13836 / NRRL 3357 / JCM 12722 / SRRC 167).